The following is a 304-amino-acid chain: MPELALLEEVVEKVRPLLGQGKVANYIPALASVDAGKLGIAVTTVDGETLGAGDYLEPFSIQSISKVFSLTLALTLYEEAEIWSRVGKEPSGHSFNSLVQVELERGKPRNPFINAGALVIADLLQSRLGAPKHRMLELVRQLSQNDKVCFDKQVADSEYQHSARNAAIAYLMKSFGNFQGDVDTVLRTYFHYCALKMNCADLSRAMLYLANRGKTVDGTELISQVQTRQLNALLATSGLYDGAGEFAYRVGMPGKSGVGGGIIAVIPGELSICVWSPELDENGNSLAGTAMLEHLSQRLGRSIF.

Residues S63, N114, E158, N165, Y189, Y240, and V258 each contribute to the substrate site.

Belongs to the glutaminase family. In terms of assembly, homotetramer.

It carries out the reaction L-glutamine + H2O = L-glutamate + NH4(+). The protein is Glutaminase of Shewanella putrefaciens (strain CN-32 / ATCC BAA-453).